A 508-amino-acid chain; its full sequence is Ankyrin repeat domain-containing protein 34B (508 aa).

ANK repeat units follow at residues 9 to 38, 42 to 79, 83 to 113, and 117 to 146; these read TDGN…YINE, RGET…DPNI, SGKS…DLSL, and SGYS…AKGK. The interval 157-185 is disordered; that stretch reads PSGRHTTQHHLNMPPADMDGSHPPATPSE. Residue Ser-260 is modified to Phosphoserine. Thr-269 carries the post-translational modification Phosphothreonine. Position 293 is a phosphoserine (Ser-293). A compositionally biased stretch (polar residues) spans 361–370; it reads GANHYSSDSQ. The disordered stretch occupies residues 361 to 380; the sequence is GANHYSSDSQLAEGVTPPTV.

Belongs to the ANKRD34 family. Post-translationally, phosphorylated. As to expression, specifically and constitutively expressed in brain (at protein level).

The protein resides in the cytoplasm. The protein localises to the nucleus. The chain is Ankyrin repeat domain-containing protein 34B (Ankrd34b) from Mus musculus (Mouse).